A 276-amino-acid polypeptide reads, in one-letter code: MGQKVNPHGFRLGITTDFKSRWYADKLYKDYVKEDVAIRRMMTKGMERAGISKVEIERTRDRVRVDIHTARPGIVIGRRGAEADRIRGELEKLTGKQVQLNILEVKNPEVDAQLVAQAVAEQLSSRVSFRRAMRKSMQSSMKAGAKGIKIQCGGRLGGAEMSRSEFYREGRVPLHTLRANVDYGFFEAKTTFGRIGVKVWIYKGDVKNIAEVRAENAAARAGNRPARGGADRPAGRGGRGGERGGRGRKPQQSPAAEAPKADAAAAPAAESTGTEA.

Residues 38 to 106 form the KH type-2 domain; the sequence is IRRMMTKGME…QVQLNILEVK (69 aa). The segment covering 216–228 has biased composition (low complexity); it reads NAAARAGNRPARG. The segment at 216 to 276 is disordered; sequence NAAARAGNRP…PAAESTGTEA (61 aa). Positions 229 to 245 are enriched in basic and acidic residues; that stretch reads GADRPAGRGGRGGERGG. Over residues 254-269 the composition is skewed to low complexity; the sequence is PAAEAPKADAAAAPAA.

The protein belongs to the universal ribosomal protein uS3 family. As to quaternary structure, part of the 30S ribosomal subunit. Forms a tight complex with proteins S10 and S14.

Its function is as follows. Binds the lower part of the 30S subunit head. Binds mRNA in the 70S ribosome, positioning it for translation. The polypeptide is Small ribosomal subunit protein uS3 (Streptomyces griseus subsp. griseus (strain JCM 4626 / CBS 651.72 / NBRC 13350 / KCC S-0626 / ISP 5235)).